The sequence spans 477 residues: Bifunctional protein HldE (477 aa).

Residues 1 to 319 (MTPPLPGFRD…AALGGGPAPA (319 aa)) form a ribokinase region. Residue 195-198 (NLAE) participates in ATP binding. Residue Asp264 is part of the active site. The cytidylyltransferase stretch occupies residues 346 to 477 (MTNGCFDLLH…DLIARIRSRG (132 aa)).

The protein in the N-terminal section; belongs to the carbohydrate kinase PfkB family. It in the C-terminal section; belongs to the cytidylyltransferase family. In terms of assembly, homodimer.

It catalyses the reaction D-glycero-beta-D-manno-heptose 7-phosphate + ATP = D-glycero-beta-D-manno-heptose 1,7-bisphosphate + ADP + H(+). It carries out the reaction D-glycero-beta-D-manno-heptose 1-phosphate + ATP + H(+) = ADP-D-glycero-beta-D-manno-heptose + diphosphate. It participates in nucleotide-sugar biosynthesis; ADP-L-glycero-beta-D-manno-heptose biosynthesis; ADP-L-glycero-beta-D-manno-heptose from D-glycero-beta-D-manno-heptose 7-phosphate: step 1/4. The protein operates within nucleotide-sugar biosynthesis; ADP-L-glycero-beta-D-manno-heptose biosynthesis; ADP-L-glycero-beta-D-manno-heptose from D-glycero-beta-D-manno-heptose 7-phosphate: step 3/4. In terms of biological role, catalyzes the phosphorylation of D-glycero-D-manno-heptose 7-phosphate at the C-1 position to selectively form D-glycero-beta-D-manno-heptose-1,7-bisphosphate. Catalyzes the ADP transfer from ATP to D-glycero-beta-D-manno-heptose 1-phosphate, yielding ADP-D-glycero-beta-D-manno-heptose. The protein is Bifunctional protein HldE of Halorhodospira halophila (strain DSM 244 / SL1) (Ectothiorhodospira halophila (strain DSM 244 / SL1)).